An 86-amino-acid chain; its full sequence is UPF0125 protein bbp_234 (86 aa).

The protein belongs to the UPF0125 (RnfH) family.

The protein is UPF0125 protein bbp_234 of Buchnera aphidicola subsp. Baizongia pistaciae (strain Bp).